The chain runs to 320 residues: o-succinylbenzoate synthase (320 aa).

Lys133 acts as the Proton donor in catalysis. Residues Asp161, Glu190, and Asp213 each coordinate Mg(2+). The active-site Proton acceptor is Lys235.

This sequence belongs to the mandelate racemase/muconate lactonizing enzyme family. MenC type 1 subfamily. A divalent metal cation is required as a cofactor.

The enzyme catalyses (1R,6R)-6-hydroxy-2-succinyl-cyclohexa-2,4-diene-1-carboxylate = 2-succinylbenzoate + H2O. The protein operates within quinol/quinone metabolism; 1,4-dihydroxy-2-naphthoate biosynthesis; 1,4-dihydroxy-2-naphthoate from chorismate: step 4/7. Its pathway is quinol/quinone metabolism; menaquinone biosynthesis. Its function is as follows. Converts 2-succinyl-6-hydroxy-2,4-cyclohexadiene-1-carboxylate (SHCHC) to 2-succinylbenzoate (OSB). In Escherichia fergusonii (strain ATCC 35469 / DSM 13698 / CCUG 18766 / IAM 14443 / JCM 21226 / LMG 7866 / NBRC 102419 / NCTC 12128 / CDC 0568-73), this protein is o-succinylbenzoate synthase.